A 219-amino-acid chain; its full sequence is Ribose-5-phosphate isomerase A (219 aa).

Substrate is bound by residues 28–31 (TGST), 81–84 (DGAD), and 94–97 (KGGG). Glutamate 103 acts as the Proton acceptor in catalysis. Lysine 121 is a binding site for substrate.

The protein belongs to the ribose 5-phosphate isomerase family. As to quaternary structure, homodimer.

The catalysed reaction is aldehydo-D-ribose 5-phosphate = D-ribulose 5-phosphate. The protein operates within carbohydrate degradation; pentose phosphate pathway; D-ribose 5-phosphate from D-ribulose 5-phosphate (non-oxidative stage): step 1/1. Catalyzes the reversible conversion of ribose-5-phosphate to ribulose 5-phosphate. In Photorhabdus laumondii subsp. laumondii (strain DSM 15139 / CIP 105565 / TT01) (Photorhabdus luminescens subsp. laumondii), this protein is Ribose-5-phosphate isomerase A.